A 541-amino-acid polypeptide reads, in one-letter code: Cyclin-T1-4 (541 aa).

Positions 277-366 (VSEVESSVGG…KSRSGVEAPG (90 aa)) are disordered. Positions 307 to 325 (SDNLGGSTKATQNRSNDNG) are enriched in polar residues. A compositionally biased stretch (basic and acidic residues) spans 336 to 354 (QKGERDTETKDSMHTESHP). Serine 396 bears the Phosphoserine mark. Residues 445-541 (EDDKDIQNKS…REPRRHSQER (97 aa)) form a disordered region. Basic and acidic residues predominate over residues 493 to 511 (MESPCEKQLGEGKRRHDNS). Positions 519–528 (KTNPGGSSHS) are enriched in polar residues. The segment covering 529–541 (YGDREPRRHSQER) has biased composition (basic and acidic residues).

It belongs to the cyclin family. Cyclin T subfamily.

The protein is Cyclin-T1-4 (CYCT1-4) of Arabidopsis thaliana (Mouse-ear cress).